Here is a 164-residue protein sequence, read N- to C-terminus: Cyclin-dependent kinase inhibitor 1 (164 aa).

Ser2 bears the N-acetylserine mark. Ser2 participates in a covalent cross-link: Glycyl serine ester (Ser-Gly) (interchain with G-Cter in ubiquitin). A C4-type zinc finger spans residues 13-41 (HGSKACRRLFGPVDSEQLRRDCDALMAGC). Positions 17-24 (ACRRLFGP) are required for binding cyclins. Residues 53–58 (FVTETP) form a required for binding CDKs region. A disordered region spans residues 80–164 (AGPRGGRDDL…RRLIFSKRKP (85 aa)). A Phosphoserine; by GSK3-beta modification is found at Ser114. Ser130 carries the phosphoserine modification. The PIP-box K+4 motif motif lies at 140–164 (RKRRQTSMTDFYHSKRRLIFSKRKP). The short motif at 141–156 (KRRQTSMTDFYHSKRR) is the Nuclear localization signal element. A Phosphothreonine; by PKA, PKB/AKT1, PIM1 and PIM2 modification is found at Thr145. Phosphoserine; by PKC and NUAK1 is present on Ser146. Residues 152 to 164 (HSKRRLIFSKRKP) form an interaction with TRIM39 region. Residues 153–164 (SKRRLIFSKRKP) are compositionally biased toward basic residues. A Phosphoserine modification is found at Ser160.

The protein belongs to the CDI family. Interacts with HDAC1; the interaction is prevented by competitive binding of C10orf90/FATS to HDAC1 facilitating acetylation and protein stabilization of CDKN1A/p21. Interacts with MKRN1. Interacts with PSMA3. Interacts with PCNA. Component of the ternary complex, cyclin D-CDK4-CDKN1A. Interacts (via its N-terminal domain) with CDK4; the interaction promotes the assembly of the cyclin D-CDK4 complex, its nuclear translocation and promotes the cyclin D-dependent enzyme activity of CDK4. Binding to CDK2 leads to CDK2/cyclin E inactivation at the G1-S phase DNA damage checkpoint, thereby arresting cells at the G1-S transition during DNA repair. Interacts with PIM1. Interacts with STK11 and NUAK1. Interacts with DTL and TRIM39. Interacts with PKP3; the interaction sequesters CDKN1A to the cytoplasm thereby repressing its role as an inhibitor of CDK4- and CDK6-driven RB1 phosphorylation. Post-translationally, phosphorylation of Thr-145 by Akt or of Ser-146 by PKC impairs binding to PCNA. Phosphorylation at Ser-114 by GSK3-beta enhances ubiquitination by the DCX(DTL) complex. Phosphorylation of Thr-145 by PIM2 enhances protein stability and inhibits cell proliferation. Phosphorylation of Thr-145 by PIM1 results in the relocation of CDKN1A to the cytoplasm and enhanced CDKN1A protein stability. UV radiation-induced phosphorylation at Ser-146 by NUAK1 leads to its degradation. Ubiquitinated by MKRN1; leading to polyubiquitination and 26S proteasome-dependent degradation. Ubiquitinated by the DCX(DTL) complex, also named CRL4(CDT2) complex, leading to its degradation during S phase or following UV irradiation. Ubiquitination by the DCX(DTL) complex is essential to control replication licensing and is PCNA-dependent: interacts with PCNA via its PIP-box, while the presence of the containing the 'K+4' motif in the PIP box, recruit the DCX(DTL) complex, leading to its degradation. Ubiquitination at Ser-2 leads to degradation by the proteasome pathway. Ubiquitinated by RNF114; leading to proteasomal degradation. In terms of processing, acetylation leads to protein stability. Acetylated in vitro on Lys-141, Lys-154, Lys-161 and Lys-163. Deacetylation by HDAC1 is prevented by competitive binding of C10orf90/FATS to HDAC1.

It localises to the cytoplasm. It is found in the nucleus. In terms of biological role, may be involved in p53/TP53 mediated inhibition of cellular proliferation in response to DNA damage. Binds to and inhibits cyclin-dependent kinase activity, preventing phosphorylation of critical cyclin-dependent kinase substrates and blocking cell cycle progression. Functions in the nuclear localization and assembly of cyclin D-CDK4 complex and promotes its kinase activity towards RB1. At higher stoichiometric ratios, inhibits the kinase activity of the cyclin D-CDK4 complex. Inhibits DNA synthesis by DNA polymerase delta by competing with POLD3 for PCNA binding. Plays an important role in controlling cell cycle progression and DNA damage-induced G2 arrest. Negatively regulates the CDK4- and CDK6-driven phosphorylation of RB1 in keratinocytes, thereby resulting in the release of E2F1 and subsequent transcription of E2F1-driven G1/S phase promoting genes. The chain is Cyclin-dependent kinase inhibitor 1 (CDKN1A) from Felis catus (Cat).